A 111-amino-acid chain; its full sequence is Integration host factor subunit alpha (111 aa).

The protein belongs to the bacterial histone-like protein family. In terms of assembly, heterodimer of an alpha and a beta chain.

This protein is one of the two subunits of integration host factor, a specific DNA-binding protein that functions in genetic recombination as well as in transcriptional and translational control. The sequence is that of Integration host factor subunit alpha from Chelativorans sp. (strain BNC1).